A 533-amino-acid chain; its full sequence is Malate synthase A (533 aa).

Arginine 166 acts as the Proton acceptor in catalysis. Residue aspartate 447 is the Proton donor of the active site.

Belongs to the malate synthase family.

The protein localises to the cytoplasm. The enzyme catalyses glyoxylate + acetyl-CoA + H2O = (S)-malate + CoA + H(+). It functions in the pathway carbohydrate metabolism; glyoxylate cycle; (S)-malate from isocitrate: step 2/2. This is Malate synthase A (aceB) from Escherichia coli (strain K12).